Here is a 208-residue protein sequence, read N- to C-terminus: Small ribosomal subunit protein eS1 (208 aa).

Belongs to the eukaryotic ribosomal protein eS1 family.

This is Small ribosomal subunit protein eS1 from Saccharolobus solfataricus (strain ATCC 35092 / DSM 1617 / JCM 11322 / P2) (Sulfolobus solfataricus).